A 179-amino-acid chain; its full sequence is Protein GrpE (179 aa).

This sequence belongs to the GrpE family. As to quaternary structure, homodimer.

The protein resides in the cytoplasm. Its function is as follows. Participates actively in the response to hyperosmotic and heat shock by preventing the aggregation of stress-denatured proteins, in association with DnaK and GrpE. It is the nucleotide exchange factor for DnaK and may function as a thermosensor. Unfolded proteins bind initially to DnaJ; upon interaction with the DnaJ-bound protein, DnaK hydrolyzes its bound ATP, resulting in the formation of a stable complex. GrpE releases ADP from DnaK; ATP binding to DnaK triggers the release of the substrate protein, thus completing the reaction cycle. Several rounds of ATP-dependent interactions between DnaJ, DnaK and GrpE are required for fully efficient folding. The chain is Protein GrpE from Rickettsia felis (strain ATCC VR-1525 / URRWXCal2) (Rickettsia azadi).